Reading from the N-terminus, the 538-residue chain is MFRRNIITSAILLMAPLAFSAQSLAESLTVEQRLELLEKALRETQSELKKYKDEEKKKYTPATVNRSVSTNDQGYAANPFPTSRAAKPDAVLVKNEEKNASETGSIYSSMTLKDFSKFVKDEIGFSYNGYYRSGWGTASHGSPKSWAIGSLGRFGNEYSGWFDLQLKQRVYNENGKRVDAIVMMDGNVGQQYSTGWFGDNAGGENFMQFSDMYVTTKGFLPFAPEADFWVGKHGAPKIEIQMLDWKTQRTDAAAGVGLENWKVGPGKIDIALVREDVDDYDRSLQNKQQINTNTIDLRYKDIPLWDKATLMVSGRYVSANESASEKDNQDNNGYYDWKETWMFGTSLTQKFDKGGFNEFSFLVANNSIASNFGRYAGASPFTTFNGRYYGDHTGGTAVRLTSQGEAYIGDHFIVANAIVYSFGNDIYSYETGAHSDFESIRAVVRPAYIWDQYNQTGVELGYFTQQNKDANSNKYNESGYKTTLFHTFKVNTSMLTSRPEIRFYATYIKALENELDGFTFEDNKDDQFAVGAQAEIWW.

Residues 1 to 25 form the signal peptide; it reads MFRRNIITSAILLMAPLAFSAQSLA.

This sequence belongs to the porin LamB (TC 1.B.3) family.

The protein localises to the cell outer membrane. Its function is as follows. May be a sugar porin with a broad carbohydrate specificity. This Escherichia coli O6:H1 (strain CFT073 / ATCC 700928 / UPEC) protein is Putative outer membrane porin BglH (bglH).